Consider the following 687-residue polypeptide: Putative ammonium transporter 3 (687 aa).

Transmembrane regions (helical) follow at residues 39–59 (AVWI…FGLL), 77–97 (VVDV…FSYG), 134–154 (ASFL…SGAV), 162–182 (SYIL…HWVW), 196–216 (FAGC…ATVF), 240–260 (LGTF…VWGI), 272–292 (AVAT…ISFV), 299–319 (VNFL…ICAV), 323–343 (WHAL…LPLL), 352–372 (VGIV…VGIF), and 404–424 (CTAA…FLIS). Disordered regions lie at residues 521-544 (RTNA…FNNQ), 549-568 (AVSS…RRTE), and 592-687 (PPEE…NPPV). The segment covering 549–564 (AVSSTVSTARNGPSTG) has biased composition (polar residues). Composition is skewed to low complexity over residues 614–632 (SPSS…SPSI) and 648–665 (STAS…KNST).

Belongs to the ammonia transporter channel (TC 1.A.11.2) family.

The protein localises to the membrane. Its function is as follows. Involved in the uptake of ammonia. The chain is Putative ammonium transporter 3 (amt-3) from Caenorhabditis elegans.